The following is a 180-amino-acid chain: Inner membrane-spanning protein YciB (180 aa).

The next 5 membrane-spanning stretches (helical) occupy residues 25–45, 49–69, 76–96, 118–138, and 150–170; these read QNATLYMLITSIICITLCYII, VSKLSIISSTVLFISGIITLI, IKIKPTILYVIFGIIFLMSGI, IILSYRTAAFFFFMAVVNEVV, and FKVFGVIPITFIFILLQLPLL.

The protein belongs to the YciB family.

The protein resides in the cell inner membrane. Plays a role in cell envelope biogenesis, maintenance of cell envelope integrity and membrane homeostasis. This is Inner membrane-spanning protein YciB from Rickettsia prowazekii (strain Madrid E).